Here is a 1199-residue protein sequence, read N- to C-terminus: Nucleolar protein 6 (1199 aa).

Basic residues predominate over residues methionine 1–lysine 10. Disordered regions lie at residues methionine 1 to proline 51 and lysine 1146 to lysine 1199. 2 stretches are compositionally biased toward basic and acidic residues: residues histidine 28–histidine 37 and lysine 1146–threonine 1169.

This sequence belongs to the NRAP family. In terms of assembly, part of the small subunit (SSU) processome, composed of more than 70 proteins and the RNA chaperone small nucleolar RNA (snoRNA) U3.

It is found in the nucleus. Its subcellular location is the nucleolus. It localises to the chromosome. In terms of biological role, part of the small subunit (SSU) processome, first precursor of the small eukaryotic ribosomal subunit. During the assembly of the SSU processome in the nucleolus, many ribosome biogenesis factors, an RNA chaperone and ribosomal proteins associate with the nascent pre-rRNA and work in concert to generate RNA folding, modifications, rearrangements and cleavage as well as targeted degradation of pre-ribosomal RNA by the RNA exosome. The protein is Nucleolar protein 6 of Drosophila yakuba (Fruit fly).